The primary structure comprises 117 residues: Large ribosomal subunit protein bL19 (117 aa).

The protein belongs to the bacterial ribosomal protein bL19 family.

This protein is located at the 30S-50S ribosomal subunit interface and may play a role in the structure and function of the aminoacyl-tRNA binding site. This is Large ribosomal subunit protein bL19 from Proteus mirabilis (strain HI4320).